Reading from the N-terminus, the 219-residue chain is 7-cyano-7-deazaguanine synthase (219 aa).

An ATP-binding site is contributed by L8–L18. The Zn(2+) site is built by C185, C193, C196, and C199.

It belongs to the QueC family. Zn(2+) serves as cofactor.

It catalyses the reaction 7-carboxy-7-deazaguanine + NH4(+) + ATP = 7-cyano-7-deazaguanine + ADP + phosphate + H2O + H(+). Its pathway is purine metabolism; 7-cyano-7-deazaguanine biosynthesis. Its function is as follows. Catalyzes the ATP-dependent conversion of 7-carboxy-7-deazaguanine (CDG) to 7-cyano-7-deazaguanine (preQ(0)). The protein is 7-cyano-7-deazaguanine synthase of Desulfotalea psychrophila (strain LSv54 / DSM 12343).